Consider the following 64-residue polypeptide: Conotoxin Pn-B01121 (64 aa).

Positions 1 to 22 (MCCLPVFVILLLLIASAPSVDA) are cleaved as a signal peptide. Positions 23–48 (LPKTKDDMSLASFHDNAKRTLQILSN) are excised as a propeptide. Tryptophan amide is present on Trp-63.

Belongs to the conotoxin T superfamily. Contains 2 disulfide bonds that can be either 'C1-C3, C2-C4' or 'C1-C4, C2-C3', since these disulfide connectivities have been observed for conotoxins with cysteine framework V (for examples, see AC P0DQQ7 and AC P81755). In terms of tissue distribution, expressed by the venom duct.

It localises to the secreted. This Conus pennaceus (Feathered cone) protein is Conotoxin Pn-B01121.